The following is a 321-amino-acid chain: MSKPIQMERGVKYRDADKMALIPIKNMPTEQKEVLRKPEWMKIKLPADSQRIQDIKAAMRKNNLHSVCEEASCPNLAECFNHGTATFMILGAICTRRCPFCDVAHGRPNAPEAEEPKKLAQTIHDMKLKYVVITSVDRDDLRDGGAQHFADCNREIRALNPHIKIETLVPDFRGRMEVALEALKDNPPDVFNHNLETAPRLYRKVRPGANYKWSLELLRQFKEQHPHVPTKSGLMMGLGETKEEIVEVLKDLRAHGVTMLTLGQYLAPSRHHLPVERYVPPAEFDELKEVALELGFTHAACGPFVRSSYHADLQAKGLEVK.

[4Fe-4S] cluster is bound by residues Cys-68, Cys-73, Cys-79, Cys-94, Cys-98, Cys-101, and Ser-308. Positions 80-297 (FNHGTATFMI…KEVALELGFT (218 aa)) constitute a Radical SAM core domain.

It belongs to the radical SAM superfamily. Lipoyl synthase family. It depends on [4Fe-4S] cluster as a cofactor.

The protein localises to the cytoplasm. The enzyme catalyses [[Fe-S] cluster scaffold protein carrying a second [4Fe-4S](2+) cluster] + N(6)-octanoyl-L-lysyl-[protein] + 2 oxidized [2Fe-2S]-[ferredoxin] + 2 S-adenosyl-L-methionine + 4 H(+) = [[Fe-S] cluster scaffold protein] + N(6)-[(R)-dihydrolipoyl]-L-lysyl-[protein] + 4 Fe(3+) + 2 hydrogen sulfide + 2 5'-deoxyadenosine + 2 L-methionine + 2 reduced [2Fe-2S]-[ferredoxin]. Its pathway is protein modification; protein lipoylation via endogenous pathway; protein N(6)-(lipoyl)lysine from octanoyl-[acyl-carrier-protein]: step 2/2. Its function is as follows. Catalyzes the radical-mediated insertion of two sulfur atoms into the C-6 and C-8 positions of the octanoyl moiety bound to the lipoyl domains of lipoate-dependent enzymes, thereby converting the octanoylated domains into lipoylated derivatives. This is Lipoyl synthase from Vibrio cholerae serotype O1 (strain ATCC 39315 / El Tor Inaba N16961).